The following is a 381-amino-acid chain: MISLSLLYRILTLPIILVGTTILYFTIGTNFPHDELRHNLLSTLFCSSMLHLSKGLTVKDVRIFFHDSIGSTLLKNRKKLNSENELPNYGEKFTHKYDNQDMPDSVWLAKVNGMTKSDPIILHLHGGMMALPYDKVILVGLSNLYKLFSTTMNRPPSILLVDYSLVSQGYTYPKQVRECLNVYQVLISKGFRNITVLGESAGGTLILSFLYQISELSKLNKVVWPKGVALISPWLDLTNAKKIGSYRANDGLDVICYETLNRFGKAYVNNEESLFTSSVVNINMNCDISIWSKIPPIQDGKVLVLFGENEVFRDEILSWTSKIGLLKAYPNRVLMDKQGIHIGLFLEESPSIGPGMTNLDIWKKKFSVNSLYTFLRETFEE.

The Cytoplasmic portion of the chain corresponds to 1–9 (MISLSLLYR). A helical; Signal-anchor for type II membrane protein membrane pass occupies residues 10–30 (ILTLPIILVGTTILYFTIGTN). The Lumenal segment spans residues 31–381 (FPHDELRHNL…YTFLRETFEE (351 aa)). Residues 125-127 (HGG) carry the Involved in the stabilization of the negatively charged intermediate by the formation of the oxyanion hole motif. A glycan (N-linked (GlcNAc...) asparagine) is linked at Asn193. Ser200 is an active-site residue.

This sequence belongs to the 'GDXG' lipolytic enzyme family.

Its subcellular location is the cytoplasm. It localises to the endoplasmic reticulum membrane. In terms of biological role, required for the deacetylation of acetylated sterols. Has a role in meiosis. In Schizosaccharomyces pombe (strain 972 / ATCC 24843) (Fission yeast), this protein is Putative steryl acetyl hydrolase mug81 (mug180).